Here is a 170-residue protein sequence, read N- to C-terminus: ATP synthase subunit b (170 aa).

Residues 25-45 (LIPNGTFFAVLIIFLIVLGVI) traverse the membrane as a helical segment. The interval 121 to 147 (EVAQTLTQADQQLSAQGDQVRSGLESS) is disordered. Positions 122 to 139 (VAQTLTQADQQLSAQGDQ) are enriched in polar residues.

It belongs to the ATPase B chain family. As to quaternary structure, F-type ATPases have 2 components, F(1) - the catalytic core - and F(0) - the membrane proton channel. F(1) has five subunits: alpha(3), beta(3), gamma(1), delta(1), epsilon(1). F(0) has three main subunits: a(1), b(2) and c(10-14). The alpha and beta chains form an alternating ring which encloses part of the gamma chain. F(1) is attached to F(0) by a central stalk formed by the gamma and epsilon chains, while a peripheral stalk is formed by the delta and b chains.

The protein resides in the cell membrane. F(1)F(0) ATP synthase produces ATP from ADP in the presence of a proton or sodium gradient. F-type ATPases consist of two structural domains, F(1) containing the extramembraneous catalytic core and F(0) containing the membrane proton channel, linked together by a central stalk and a peripheral stalk. During catalysis, ATP synthesis in the catalytic domain of F(1) is coupled via a rotary mechanism of the central stalk subunits to proton translocation. Functionally, component of the F(0) channel, it forms part of the peripheral stalk, linking F(1) to F(0). The chain is ATP synthase subunit b from Mycolicibacterium smegmatis (strain ATCC 700084 / mc(2)155) (Mycobacterium smegmatis).